The following is a 152-amino-acid chain: AIG2-like protein D (152 aa).

13–18 (YGSLMA) is a binding site for substrate. The Proton acceptor role is filled by E81.

It belongs to the gamma-glutamylcyclotransferase family. As to expression, expressed mainly in leaves.

Its function is as follows. Putative gamma-glutamylcyclotransferase. The polypeptide is AIG2-like protein D (Arabidopsis thaliana (Mouse-ear cress)).